The primary structure comprises 218 residues: Large ribosomal subunit protein uL3 (218 aa).

The disordered stretch occupies residues 124-162 (KRHGFSRGPMTHGSKNHREPGSTGAGTTPGRIYPGKRMA).

The protein belongs to the universal ribosomal protein uL3 family. Part of the 50S ribosomal subunit. Forms a cluster with proteins L14 and L19.

One of the primary rRNA binding proteins, it binds directly near the 3'-end of the 23S rRNA, where it nucleates assembly of the 50S subunit. In Synechococcus sp. (strain CC9605), this protein is Large ribosomal subunit protein uL3.